A 535-amino-acid polypeptide reads, in one-letter code: Glutamyl-tRNA reductase 3, chloroplastic (535 aa).

The active-site Nucleophile is the Cys-131. Substrate contacts are provided by residues Cys-131–Arg-133, Ser-190, Glu-195–Gln-197, and Gln-201. Gly-272 to Gly-277 contributes to the NADP(+) binding site.

It belongs to the glutamyl-tRNA reductase family. As to expression, primarily expressed in roots.

It is found in the plastid. The protein resides in the chloroplast. The catalysed reaction is (S)-4-amino-5-oxopentanoate + tRNA(Glu) + NADP(+) = L-glutamyl-tRNA(Glu) + NADPH + H(+). Its pathway is porphyrin-containing compound metabolism; protoporphyrin-IX biosynthesis; 5-aminolevulinate from L-glutamyl-tRNA(Glu): step 1/2. In terms of biological role, catalyzes the NADPH-dependent reduction of glutamyl-tRNA(Glu) to glutamate 1-semialdehyde (GSA). This is Glutamyl-tRNA reductase 3, chloroplastic (HEMA3) from Hordeum vulgare (Barley).